The sequence spans 118 residues: DNA-binding protein MmarC6_0793 (118 aa).

Positions 1–12 (MNPEEIRQRRLQ) are enriched in basic and acidic residues. Residues 1 to 33 (MNPEEIRQRRLQEMQAKAQEQGAQDPEAQRQMQ) form a disordered region. The segment covering 24 to 33 (QDPEAQRQMQ) has biased composition (low complexity).

Belongs to the PDCD5 family.

The protein is DNA-binding protein MmarC6_0793 of Methanococcus maripaludis (strain C6 / ATCC BAA-1332).